The primary structure comprises 867 residues: V-set and immunoglobulin domain-containing protein 10-like (867 aa).

Positions 1–27 (MDNPQALPLFLLLASLVGILTLRASSG) are cleaved as a signal peptide. Topologically, residues 28 to 776 (LQQTNFSSAF…RAGPTLSHGA (749 aa)) are extracellular. N-linked (GlcNAc...) asparagine glycosylation occurs at asparagine 32. Residues 35–45 (SAFSSDSKSSS) are compositionally biased toward low complexity. The segment at 35-60 (SAFSSDSKSSSQGLGVEVPSIKPPSW) is disordered. Asparagine 88, asparagine 96, and asparagine 144 each carry an N-linked (GlcNAc...) asparagine glycan. The disordered stretch occupies residues 104 to 186 (LSPVSPFSET…PESKFSAETH (83 aa)). Residues 137 to 153 (TVKTPASNISTQVSHTK) show a composition bias toward polar residues. A compositionally biased stretch (basic and acidic residues) spans 159-170 (PDSKFSPDDMDL). The segment covering 173-186 (SAQSPESKFSAETH) has biased composition (polar residues). Ig-like C2-type domains lie at 302–394 (PQLS…ADVS) and 402–487 (PTIT…SLLN). Cysteines 324 and 378 form a disulfide. Asparagine 423 is a glycosylation site (N-linked (GlcNAc...) asparagine). Cysteine 428 and cysteine 471 form a disulfide bridge. Asparagine 487 carries an N-linked (GlcNAc...) asparagine glycan. The segment at 602-627 (ASGCPPPSRASWAREGRPLAPGGGSR) is disordered. Asparagine 641 and asparagine 650 each carry an N-linked (GlcNAc...) asparagine glycan. A helical transmembrane segment spans residues 777 to 797 (IAGIVLGSLLGLALLAVLLLL). At 798 to 867 (CICCLCRFRG…QAQTPVQLSL (70 aa)) the chain is on the cytoplasmic side.

In terms of tissue distribution, expressed in the esophagus, particularly in the suprabasilar layers of the epithelium. Expression is largely reduced in esophageal metaplasia, dysplasia, and adenocarcinoma lesions.

The protein resides in the membrane. This Homo sapiens (Human) protein is V-set and immunoglobulin domain-containing protein 10-like (VSIG10L).